Here is a 253-residue protein sequence, read N- to C-terminus: uncharacterized protein (253 aa).

Residues I17, S36, D62, N89, Y158, K162, V191, and T193 each coordinate NADP(+). The active-site Proton donor is Y158. The active-site Lowers pKa of active site Tyr is K162.

The protein belongs to the short-chain dehydrogenases/reductases (SDR) family.

It localises to the cytoplasm. The protein localises to the nucleus. This is an uncharacterized protein from Schizosaccharomyces pombe (strain 972 / ATCC 24843) (Fission yeast).